Consider the following 181-residue polypeptide: U1 small nuclear ribonucleoprotein C (181 aa).

The segment at 2–34 adopts a Matrin-type zinc-finger fold; it reads PKCDYCDVYLTHDSMSVRKAHNSGRNHLRNVVD. 2 stretches are compositionally biased toward pro residues: residues 129–143 and 150–174; these read PGMPAGMPFPPPGGL and PIPPPGGFPGMPPPGQGFPGMPPPG. The tract at residues 129–181 is disordered; it reads PGMPAGMPFPPPGGLPPNFQFPIPPPGGFPGMPPPGQGFPGMPPPGGNHDERR.

This sequence belongs to the U1 small nuclear ribonucleoprotein C family. As to quaternary structure, U1 snRNP is composed of the 7 core Sm proteins B/B', D1, D2, D3, E, F and G that assemble in a heptameric protein ring on the Sm site of the small nuclear RNA to form the core snRNP, and at least 3 U1 snRNP-specific proteins U1-70K, U1-A and U1-C. U1-C interacts with U1 snRNA and the 5' splice-site region of the pre-mRNA.

Its subcellular location is the nucleus. Its function is as follows. Component of the spliceosomal U1 snRNP, which is essential for recognition of the pre-mRNA 5' splice-site and the subsequent assembly of the spliceosome. U1-C is directly involved in initial 5' splice-site recognition for both constitutive and regulated alternative splicing. The interaction with the 5' splice-site seems to precede base-pairing between the pre-mRNA and the U1 snRNA. Stimulates commitment or early (E) complex formation by stabilizing the base pairing of the 5' end of the U1 snRNA and the 5' splice-site region. This Sclerotinia sclerotiorum (strain ATCC 18683 / 1980 / Ss-1) (White mold) protein is U1 small nuclear ribonucleoprotein C.